The chain runs to 103 residues: Large ribosomal subunit protein bL21 (103 aa).

Belongs to the bacterial ribosomal protein bL21 family. As to quaternary structure, part of the 50S ribosomal subunit. Contacts protein L20.

In terms of biological role, this protein binds to 23S rRNA in the presence of protein L20. This is Large ribosomal subunit protein bL21 from Chromohalobacter salexigens (strain ATCC BAA-138 / DSM 3043 / CIP 106854 / NCIMB 13768 / 1H11).